The primary structure comprises 476 residues: Bifunctional protein HldE (476 aa).

The tract at residues 1-319 (MKVSLPAFEK…EALALHHGES (319 aa)) is ribokinase. An ATP-binding site is contributed by 195–198 (NMSE). The active site involves D264. Residues 345–476 (MTNGCFDILH…AIIQNIMAKQ (132 aa)) are cytidylyltransferase.

It in the N-terminal section; belongs to the carbohydrate kinase PfkB family. This sequence in the C-terminal section; belongs to the cytidylyltransferase family. In terms of assembly, homodimer.

It catalyses the reaction D-glycero-beta-D-manno-heptose 7-phosphate + ATP = D-glycero-beta-D-manno-heptose 1,7-bisphosphate + ADP + H(+). It carries out the reaction D-glycero-beta-D-manno-heptose 1-phosphate + ATP + H(+) = ADP-D-glycero-beta-D-manno-heptose + diphosphate. The protein operates within nucleotide-sugar biosynthesis; ADP-L-glycero-beta-D-manno-heptose biosynthesis; ADP-L-glycero-beta-D-manno-heptose from D-glycero-beta-D-manno-heptose 7-phosphate: step 1/4. It functions in the pathway nucleotide-sugar biosynthesis; ADP-L-glycero-beta-D-manno-heptose biosynthesis; ADP-L-glycero-beta-D-manno-heptose from D-glycero-beta-D-manno-heptose 7-phosphate: step 3/4. Catalyzes the phosphorylation of D-glycero-D-manno-heptose 7-phosphate at the C-1 position to selectively form D-glycero-beta-D-manno-heptose-1,7-bisphosphate. Its function is as follows. Catalyzes the ADP transfer from ATP to D-glycero-beta-D-manno-heptose 1-phosphate, yielding ADP-D-glycero-beta-D-manno-heptose. This Shewanella sp. (strain ANA-3) protein is Bifunctional protein HldE.